A 484-amino-acid polypeptide reads, in one-letter code: Ubiquinone biosynthesis monooxygenase COQ6, mitochondrial (484 aa).

Residues 1-41 (MLSLAKAKLAVVGIGRQCVAVRTLNGARAVHRSFSSSEHDQ) constitute a mitochondrion transit peptide.

This sequence belongs to the UbiH/COQ6 family. In terms of assembly, component of a multi-subunit COQ enzyme complex, composed of at least coq3, coq4, coq5, coq6, coq7 and coq9. Interacts with coq8b and coq7. Requires FAD as cofactor.

The protein resides in the mitochondrion inner membrane. It is found in the golgi apparatus. The protein localises to the cell projection. The enzyme catalyses a 4-hydroxy-3-(all-trans-polyprenyl)benzoate + 2 reduced [2Fe-2S]-[ferredoxin] + O2 + 2 H(+) = a 3,4-dihydroxy-5-(all-trans-polyprenyl)benzoate + 2 oxidized [2Fe-2S]-[ferredoxin] + H2O. The catalysed reaction is a 2-methoxy-6-(all-trans-polyprenyl)phenol + 2 reduced [2Fe-2S]-[ferredoxin] + O2 + 2 H(+) = a 2-methoxy-6-(all-trans-polyprenyl)benzene-1,4-diol + 2 oxidized [2Fe-2S]-[ferredoxin] + H2O. It participates in cofactor biosynthesis; ubiquinone biosynthesis. FAD-dependent monooxygenase required for two non-consecutive steps during ubiquinone biosynthesis. Required for the C5-ring hydroxylation during ubiquinone biosynthesis by catalyzing the hydroxylation of 4-hydroxy-3-(all-trans-polyprenyl)benzoic acid to 3,4-dihydroxy-5-(all-trans-polyprenyl)benzoic acid. Also acts downstream of coq4, for the C1-hydroxylation during ubiquinone biosynthesis by catalyzing the hydroxylation of 2-methoxy-6-(all-trans-polyprenyl)phenol to 2-methoxy-6-(all-trans-polyprenyl)benzene-1,4-diol. The electrons required for the hydroxylation reaction are funneled indirectly to coq6 from NADPH via a ferredoxin/ferredoxin reductase system. The polypeptide is Ubiquinone biosynthesis monooxygenase COQ6, mitochondrial (Danio rerio (Zebrafish)).